The primary structure comprises 439 residues: Microfibrillar-associated protein 1 (439 aa).

Residues 1–17 are compositionally biased toward polar residues; the sequence is MSVPSSLMKQPPIQSTA. Residues 1-200 are disordered; that stretch reads MSVPSSLMKQ…SEDEMEPRLK (200 aa). The residue at position 2 (serine 2) is an N-acetylserine. The segment covering 23 to 34 has biased composition (basic and acidic residues); sequence RNEKGEISMEKV. Serine 52 and serine 53 each carry phosphoserine. Over residues 61–70 the composition is skewed to basic and acidic residues; the sequence is QFIKKAKEQE. A Glycyl lysine isopeptide (Lys-Gly) (interchain with G-Cter in SUMO2) cross-link involves residue lysine 67. Residues 71 to 81 are compositionally biased toward acidic residues; that stretch reads AEPEEQEEDSS. Phosphoserine occurs at positions 94, 116, 118, 132, and 133. Composition is skewed to acidic residues over residues 112-122 and 131-144; these read VVGESDSEVEG and DSSE…DEEE. A compositionally biased stretch (basic and acidic residues) spans 145-163; it reads IERRRGMMRQRAQERKNEE. Residues 178–195 show a composition bias toward acidic residues; that stretch reads ESESESEYEEYTDSEDEM. Lysine 249 participates in a covalent cross-link: Glycyl lysine isopeptide (Lys-Gly) (interchain with G-Cter in SUMO2). A Phosphothreonine modification is found at threonine 267. Lysine 357 participates in a covalent cross-link: Glycyl lysine isopeptide (Lys-Gly) (interchain with G-Cter in SUMO2). Phosphoserine is present on serine 361. Residues lysine 371, lysine 381, lysine 415, and lysine 418 each participate in a glycyl lysine isopeptide (Lys-Gly) (interchain with G-Cter in SUMO2) cross-link. Serine 432 carries the post-translational modification Phosphoserine.

Belongs to the MFAP1 family. In terms of assembly, component of the spliceosome B complex. Interacts with PRPF38A (via N-terminal interaction domain).

It is found in the nucleus. Involved in pre-mRNA splicing as a component of the spliceosome. The chain is Microfibrillar-associated protein 1 from Bos taurus (Bovine).